A 327-amino-acid chain; its full sequence is Protein UL95 homolog (327 aa).

Belongs to the herpesviridae UL95 family. In terms of assembly, interacts with ORF24; this interaction may serve as a core scaffold for the assembly of the viral transcription initiation complex. Interacts with ORF66. Interacts with ORF18. Interacts with ORF23. Interacts with ORF31. Interacts with host EPAS1; this interaction stabilizes host EPAS1, ensuring its transcriptional activity.

It localises to the host nucleus. Its function is as follows. Participates in the expression of late viral mRNAs in part by interacting with ORF24. Expressed before viral DNA replication, assembles at the viral pre-replication complexes (pre-RCs) and thus serves as a hub for recruiting a viral transcription complex to ORF24 to promote late viral gene expression. Also plays a regulatory role in the viral life cycle by regulating host transcriptional regulators HIF1A and EPAS1. In Homo sapiens (Human), this protein is Protein UL95 homolog (ORF34).